Reading from the N-terminus, the 333-residue chain is NADH-quinone oxidoreductase subunit H (333 aa).

Transmembrane regions (helical) follow at residues valine 17–isoleucine 37, valine 91–valine 111, isoleucine 116–glycine 136, isoleucine 156–phenylalanine 176, methionine 188–valine 208, tyrosine 244–alanine 264, phenylalanine 272–leucine 292, and tryptophan 310–methionine 330.

The protein belongs to the complex I subunit 1 family. As to quaternary structure, NDH-1 is composed of 14 different subunits. Subunits NuoA, H, J, K, L, M, N constitute the membrane sector of the complex.

It localises to the cell inner membrane. It catalyses the reaction a quinone + NADH + 5 H(+)(in) = a quinol + NAD(+) + 4 H(+)(out). Functionally, NDH-1 shuttles electrons from NADH, via FMN and iron-sulfur (Fe-S) centers, to quinones in the respiratory chain. The immediate electron acceptor for the enzyme in this species is believed to be ubiquinone. Couples the redox reaction to proton translocation (for every two electrons transferred, four hydrogen ions are translocated across the cytoplasmic membrane), and thus conserves the redox energy in a proton gradient. This subunit may bind ubiquinone. This is NADH-quinone oxidoreductase subunit H from Acinetobacter baylyi (strain ATCC 33305 / BD413 / ADP1).